The primary structure comprises 374 residues: MAIRKKSTKSPPVLSHEFVLQNHADIVSCVAMVFLLGLMFEITAKASIIFVTLQYNVTLPATEEQATESASLYYYGIKDLATVFFYMLVAIIIHAVIQEYMLDKINRRMHFSKTKHSKFNESGQLSAFYLFACVWGTFILISENYISDPTILWRAYPHNLMTFQMKFFYISQLAYWLHAFPELYFQKTKREDIPRQLVYIGLYLFHIAGAYLLNLNHLGLVLLVLHYFVEFLFHISRLFYFSNEKYQKGFSLWAVLFVLGRLLTLILSVLTVGFGLARAENQKLDFSTGNFNVLAVRIAVLASICITQAFMVWKFINFQLRRWREHSAFQAPAVKKKPTVTKGRSSKKGTENGVNGTLTSNVADSPRNKKEKSS.

At 1–29 (MAIRKKSTKSPPVLSHEFVLQNHADIVSC) the chain is on the cytoplasmic side. The chain crosses the membrane as a helical span at residues 30 to 50 (VAMVFLLGLMFEITAKASIIF). The Lumenal segment spans residues 51–76 (VTLQYNVTLPATEEQATESASLYYYG). A glycan (N-linked (GlcNAc...) asparagine) is linked at Asn56. Residues 77–97 (IKDLATVFFYMLVAIIIHAVI) traverse the membrane as a helical segment. Over 98-121 (QEYMLDKINRRMHFSKTKHSKFNE) the chain is Cytoplasmic. The TLC domain maps to 117-326 (SKFNESGQLS…NFQLRRWREH (210 aa)). The chain crosses the membrane as a helical span at residues 122 to 142 (SGQLSAFYLFACVWGTFILIS). Residues 143–159 (ENYISDPTILWRAYPHN) are Lumenal-facing. The chain crosses the membrane as a helical span at residues 160–180 (LMTFQMKFFYISQLAYWLHAF). At 181–192 (PELYFQKTKRED) the chain is on the cytoplasmic side. Residues 193 to 213 (IPRQLVYIGLYLFHIAGAYLL) traverse the membrane as a helical segment. Position 214 (Asn214) is a topological domain, lumenal. Residues 215-235 (LNHLGLVLLVLHYFVEFLFHI) traverse the membrane as a helical segment. Topologically, residues 236-251 (SRLFYFSNEKYQKGFS) are cytoplasmic. Residues 252–272 (LWAVLFVLGRLLTLILSVLTV) form a helical membrane-spanning segment. At 273–297 (GFGLARAENQKLDFSTGNFNVLAVR) the chain is on the lumenal side. A helical membrane pass occupies residues 298-318 (IAVLASICITQAFMVWKFINF). Over 319–374 (QLRRWREHSAFQAPAVKKKPTVTKGRSSKKGTENGVNGTLTSNVADSPRNKKEKSS) the chain is Cytoplasmic. The span at 334 to 347 (VKKKPTVTKGRSSK) shows a compositional bias: basic residues. Positions 334–374 (VKKKPTVTKGRSSKKGTENGVNGTLTSNVADSPRNKKEKSS) are disordered. The span at 352 to 363 (NGVNGTLTSNVA) shows a compositional bias: polar residues. Ser365 carries the phosphoserine modification.

The protein belongs to the TRAM family. In terms of assembly, interacts with SEC61B. May interact with Derlin-1/DERL1. In terms of processing, N-glycosylated.

The protein resides in the endoplasmic reticulum membrane. Involved in the translocation of nascent protein chains into or through the endoplasmic reticulum (ER) membrane by facilitating the proper chain positioning at the SEC61 channel. Regulates the exposure of nascent secretory protein chain to the cytosol during translocation into the ER. May affect the phospholipid bilayer in the vicinity of the lateral gate of the SEC61 channel, thereby facilitating ER protein transport. Intimately associates with transmembrane (TM) domain of nascent membrane proteins during the entire integration process into the ER membrane. Associates with the second TM domain of G-protein-coupled receptor opsin/OPSD nascent chain in the ER membrane, which may facilitate its integration into the membrane. Under conditions of ER stress, participates in the disposal of misfolded ER membrane proteins during the unfolded protein response (UPR), an integrated stress response (ISR) pathway, by selectively retrotranslocating misfolded ER-membrane proteins from the ER into the cytosol where they are ubiquitinated and degraded by the proteasome. The protein is Translocating chain-associated membrane protein 1 (TRAM1) of Pongo abelii (Sumatran orangutan).